Here is a 567-residue protein sequence, read N- to C-terminus: Urease subunit alpha (567 aa).

The Urease domain maps to 129–567 (GGVDTHIHWI…LPMAQRYFLF (439 aa)). 3 residues coordinate Ni(2+): His134, His136, and Lys217. Lys217 is modified (N6-carboxylysine). A substrate-binding site is contributed by His219. 2 residues coordinate Ni(2+): His246 and His272. His320 acts as the Proton donor in catalysis. A Ni(2+)-binding site is contributed by Asp360.

It belongs to the metallo-dependent hydrolases superfamily. Urease alpha subunit family. Heterotrimer of UreA (gamma), UreB (beta) and UreC (alpha) subunits. Three heterotrimers associate to form the active enzyme. It depends on Ni cation as a cofactor. Carboxylation allows a single lysine to coordinate two nickel ions.

It is found in the cytoplasm. It catalyses the reaction urea + 2 H2O + H(+) = hydrogencarbonate + 2 NH4(+). It participates in nitrogen metabolism; urea degradation; CO(2) and NH(3) from urea (urease route): step 1/1. This is Urease subunit alpha from Citrobacter koseri (strain ATCC BAA-895 / CDC 4225-83 / SGSC4696).